Consider the following 647-residue polypeptide: Acetyl-coenzyme A synthetase (647 aa).

Residues 190–193 (RGGR) and threonine 310 each bind CoA. ATP contacts are provided by residues 386–388 (GEP), 410–415 (DTWWQT), aspartate 499, and arginine 514. Serine 522 lines the CoA pocket. Arginine 525 is a binding site for ATP. Mg(2+) is bound by residues valine 536, histidine 538, and valine 541. Residue arginine 583 participates in CoA binding. N6-acetyllysine is present on lysine 608.

The protein belongs to the ATP-dependent AMP-binding enzyme family. It depends on Mg(2+) as a cofactor. Acetylated. Deacetylation by the SIR2-homolog deacetylase activates the enzyme.

The catalysed reaction is acetate + ATP + CoA = acetyl-CoA + AMP + diphosphate. In terms of biological role, catalyzes the conversion of acetate into acetyl-CoA (AcCoA), an essential intermediate at the junction of anabolic and catabolic pathways. AcsA undergoes a two-step reaction. In the first half reaction, AcsA combines acetate with ATP to form acetyl-adenylate (AcAMP) intermediate. In the second half reaction, it can then transfer the acetyl group from AcAMP to the sulfhydryl group of CoA, forming the product AcCoA. This Xylella fastidiosa (strain Temecula1 / ATCC 700964) protein is Acetyl-coenzyme A synthetase.